The sequence spans 229 residues: MELLLLSNSTLPGKAWLEHALPLMANQLNGRRSAVFIPFAGVTQTWDEYTDKTAEVLTPLGINVTGIHRIAAPLEAIEKSEIIIVGGGNTFQLLKESRERGLLAPIADRVKRGALYIGWSAGANLACPTIRTTNDMPIVDPNGFDALGLFPLQINPHFTNALPEGHKGETREQRIRELLVVAPELTVIGLPEGNWIQVSNGQAVLGGPNTTWVFKAGEEAVALEAGHRF.

Active-site charge relay system residues include S120, D135, and H157.

It belongs to the peptidase S51 family.

It localises to the cytoplasm. It catalyses the reaction Dipeptidase E catalyzes the hydrolysis of dipeptides Asp-|-Xaa. It does not act on peptides with N-terminal Glu, Asn or Gln, nor does it cleave isoaspartyl peptides.. Functionally, hydrolyzes dipeptides containing N-terminal aspartate residues. May play a role in allowing the cell to use peptide aspartate to spare carbon otherwise required for the synthesis of the aspartate family of amino acids. This Salmonella arizonae (strain ATCC BAA-731 / CDC346-86 / RSK2980) protein is Peptidase E.